An 87-amino-acid polypeptide reads, in one-letter code: uncharacterized protein (87 aa).

The N-terminal stretch at 1-26 (MMSTQHFILSLTILIIISNLHDEVNA) is a signal peptide. Intrachain disulfides connect Cys-61–Cys-75, Cys-68–Cys-79, and Cys-74–Cys-84.

The protein localises to the secreted. This is an uncharacterized protein from Schistosoma japonicum (Blood fluke).